Consider the following 518-residue polypeptide: Sugar transport protein MST3 (518 aa).

Residues 1–18 (MAGGAVVSTGAGKDYPGK) lie on the Cytoplasmic side of the membrane. Residues 19-39 (LTLFVFFTCVVAATGGLIFGY) form a helical membrane-spanning segment. The Extracellular segment spans residues 40-80 (DIGISGGVTSMDPFLRKFFPEVYRKKQMADKNNQYCKYDNQ). Residues 81–101 (LLQTFTSSLYLAALVSSFFAA) form a helical membrane-spanning segment. Topologically, residues 102 to 117 (TVTRVLGRKWSMFAGG) are cytoplasmic. A helical membrane pass occupies residues 118–138 (LTFLIGAALNGAAENVAMLIV). The Extracellular segment spans residues 139–140 (GR). A helical transmembrane segment spans residues 141–161 (ILLGVGVGFANQSVPVYLSEM). Residues 162–167 (APARLR) are Cytoplasmic-facing. A helical transmembrane segment spans residues 168–188 (GMLNIGFQLMITIGILAAELI). Over 189-202 (NYGTAKIKAGWGWR) the chain is Extracellular. The chain crosses the membrane as a helical span at residues 203–223 (VSLALAAVPAAIITLGSLFLP). At 224 to 290 (DTPNSLIDRG…YRAQLTMAIC (67 aa)) the chain is on the cytoplasmic side. Residues 291–311 (IPFFQQLTGINVIMFYAPVLF) form a helical membrane-spanning segment. The Extracellular segment spans residues 312–322 (DTLGFKSDASL). A helical transmembrane segment spans residues 323–343 (MSAVITGLVNVFATLVSIFTV). The Cytoplasmic segment spans residues 344–351 (DRLGRRKL). A helical transmembrane segment spans residues 352–372 (FLQGGAQMVVCQVVVGTLIAV). Topologically, residues 373 to 387 (KFGTSGIGDIPKGYA) are extracellular. A helical transmembrane segment spans residues 388-408 (AVVVLFICMYVAGFAWSWGPL). Residues 409–427 (GWLVPSEIFPLEIRPAGQS) are Cytoplasmic-facing. A helical transmembrane segment spans residues 428–448 (INVSVNMLFTFVIAQAFLTML). The Extracellular portion of the chain corresponds to 449 to 452 (CHMK). The chain crosses the membrane as a helical span at residues 453–473 (FGLFYFFAGWVVIMTVFIALF). Residues 474–518 (LPETKNVPIEEMVLVWKSHWFWRRFIGDHDVHVGANHVSNNKLQP) are Cytoplasmic-facing.

Belongs to the major facilitator superfamily. Sugar transporter (TC 2.A.1.1) family. As to expression, highly expressed in roots. Expressed in xylem and sclerenchyma cells of roots. Expressed at low levels in leaves.

The protein resides in the membrane. Mediates active uptake of hexoses by sugar:proton symport. Can transport glucose, xylose and 3-O-methylglucose. May be involved in the accumulation of monosaccharides required for cell wall synthesis during root development. The protein is Sugar transport protein MST3 of Oryza sativa subsp. japonica (Rice).